The sequence spans 203 residues: Glycerol-3-phosphate acyltransferase (203 aa).

A run of 5 helical transmembrane segments spans residues 4–24, 56–76, 80–100, 112–132, and 138–158; these read IAPG…AILV, VAVL…AYML, PFWL…PVFF, FGAI…TWLL, and GYSS…VWWF.

This sequence belongs to the PlsY family. In terms of assembly, probably interacts with PlsX.

Its subcellular location is the cell inner membrane. It catalyses the reaction an acyl phosphate + sn-glycerol 3-phosphate = a 1-acyl-sn-glycero-3-phosphate + phosphate. The protein operates within lipid metabolism; phospholipid metabolism. Its function is as follows. Catalyzes the transfer of an acyl group from acyl-phosphate (acyl-PO(4)) to glycerol-3-phosphate (G3P) to form lysophosphatidic acid (LPA). This enzyme utilizes acyl-phosphate as fatty acyl donor, but not acyl-CoA or acyl-ACP. This Enterobacter sp. (strain 638) protein is Glycerol-3-phosphate acyltransferase.